Reading from the N-terminus, the 584-residue chain is Breast carcinoma-amplified sequence 1 (584 aa).

3 disordered regions span residues 1 to 29 (MGNQ…NASA), 59 to 280 (VATS…AAAI), and 297 to 377 (PNKA…GKLF). Composition is skewed to polar residues over residues 59 to 69 (VATSSPETTEI) and 112 to 128 (ADSS…SNKA). A phosphoserine mark is found at Ser124 and Ser192. 3 stretches are compositionally biased toward basic and acidic residues: residues 186 to 226 (SKPK…KVDE), 238 to 252 (PAGK…KEGQ), and 300 to 311 (AETKKDPEDTGA). The residue at position 314 (Ser314) is a Phosphoserine. Over residues 314–354 (SPTTSADLKSDKANFTSQETQGAGKNSKGCNPSGHTQSVTT) the composition is skewed to polar residues. Basic and acidic residues predominate over residues 357–366 (PAKEGTKEKS). 2 positions are modified to phosphoserine: Ser381 and Ser399. The tract at residues 415–584 (TVDLNEGDAA…VSIGPVGKSK (170 aa)) is disordered. The segment covering 428 to 439 (TEAKLKREESKP) has biased composition (basic and acidic residues). The residue at position 480 (Thr480) is a Phosphothreonine. The segment covering 494–506 (KGKEGSSKDKKSA) has biased composition (basic and acidic residues). Residues 525-540 (CTEQATVDTNSLQNGD) show a composition bias toward polar residues. Residues 541-550 (KLQKRPEKRQ) show a composition bias toward basic and acidic residues. Position 552 is a phosphoserine (Ser552). Positions 565–584 (MLDAQVQTDPVSIGPVGKSK) are interacts with DYNLL1 and DYNLL2.

Homodimer. Interacts with DYNLL1 and DYNLL2. In terms of tissue distribution, highly expressed in the brain and, more specifically, in oligodendrocytes (at protein level). Expressed in the prostate, and at lower levels in testis, intestine and colon. Overexpressed in most breast cancer cell lines and down-regulated in some colorectal tumors.

It is found in the cytoplasm. In terms of biological role, required for myelination. The chain is Breast carcinoma-amplified sequence 1 (BCAS1) from Homo sapiens (Human).